The primary structure comprises 422 residues: C-type lectin domain family 4 member M (422 aa).

Topologically, residues 1–49 (MSDSKEPRVQPLGLLEEDPTTSGIRLFPRDFQFQQTHGHKSSTGCLGHG) are cytoplasmic. The short motif at 14–15 (LL) is the Endocytosis signal element. A helical; Signal-anchor for type II membrane protein membrane pass occupies residues 50–70 (PLVLQLLSFALLAGVLVAILV). At 71 to 422 (QVYKVPSSLS…KKPIACFRDE (352 aa)) the chain is on the extracellular side. Residue N92 is glycosylated (N-linked (GlcNAc...) asparagine). A run of 8 repeats spans residues 108–130 (KLQE…PEKS), 131–151 (KQQE…ELPE), 154–176 (QLQE…PEES), 177–199 (RLQE…PEKS), 200–222 (RLQE…PEKS), 223–245 (RLQE…PEKS), 246–268 (KLQE…PDQS), and 269–291 (KQQQ…CCRC). Residues 108–292 (KLQEIYQELT…AFERLCCRCP (185 aa)) form an 8 X approximate tandem repeats region. Cystine bridges form between C288-C418, C291-C302, C319-C412, and C391-C404. The 117-residue stretch at 297-413 (FFQGNCYFMS…CNVDNYWICK (117 aa)) folds into the C-type lectin domain. Residues E382, N384, S386, E389, N400, and D401 each coordinate Ca(2+). N384 carries N-linked (GlcNAc...) asparagine glycosylation.

As to quaternary structure, homotetramer.

It is found in the membrane. Functionally, probable pathogen-recognition receptor involved in peripheral immune surveillance in liver. May mediate the endocytosis of pathogens which are subsequently degraded in lysosomal compartments. Probably recognizes in a calcium-dependent manner high mannose N-linked oligosaccharides in a variety of pathogen antigens. Is a receptor for ICAM3, probably by binding to mannose-like carbohydrates. The protein is C-type lectin domain family 4 member M (CLEC4M) of Symphalangus syndactylus (Siamang).